The sequence spans 396 residues: Elongation factor Tu (396 aa).

The tr-type G domain occupies 10 to 206 (KPHLNIGTIG…AVDENVPDPV (197 aa)). Residues 19 to 26 (GHVDHGKT) are G1. Residue 19 to 26 (GHVDHGKT) coordinates GTP. Mg(2+) is bound at residue T26. Positions 62–66 (GITIN) are G2. A G3 region spans residues 83–86 (DAPG). GTP is bound by residues 83–87 (DAPGH) and 138–141 (NKSD). The G4 stretch occupies residues 138–141 (NKSD). The interval 176 to 178 (SAL) is G5.

This sequence belongs to the TRAFAC class translation factor GTPase superfamily. Classic translation factor GTPase family. EF-Tu/EF-1A subfamily. Monomer.

Its subcellular location is the cytoplasm. It carries out the reaction GTP + H2O = GDP + phosphate + H(+). Its function is as follows. GTP hydrolase that promotes the GTP-dependent binding of aminoacyl-tRNA to the A-site of ribosomes during protein biosynthesis. This Kocuria rhizophila (strain ATCC 9341 / DSM 348 / NBRC 103217 / DC2201) protein is Elongation factor Tu.